The chain runs to 510 residues: Outer spore wall protein 7 (510 aa).

The first 23 residues, 1 to 23 (MKAVFKVTTALLACVFIARYLVC), serve as a signal peptide directing secretion. The interval 167 to 195 (FETDSETEDYEDDENENEDEDEDEDEDDV) is disordered. The span at 169 to 195 (TDSETEDYEDDENENEDEDEDEDEDDV) shows a compositional bias: acidic residues. Phosphotyrosine is present on Tyr-354.

Belongs to the OSW/SHE family.

Its function is as follows. Involved in spore wall assembly. This is Outer spore wall protein 7 from Saccharomyces cerevisiae (strain ATCC 204508 / S288c) (Baker's yeast).